Consider the following 194-residue polypeptide: CASP-like protein 4D1 (194 aa).

At 1–10 (MASRTVLLPS) the chain is on the cytoplasmic side. A helical transmembrane segment spans residues 11 to 31 (AVLILRLLSLGLLAASLALIA). Over 32–55 (ADKLNVDSDPPQRYTFRDVYAYRY) the chain is Extracellular. The helical transmembrane segment at 56 to 76 (VLAVAVIGCAYTLLQLPLAAV) threads the bilayer. Over 77–94 (SIIASGNNKRGIGAGGGS) the chain is Cytoplasmic. Residues 95–115 (VAVALLVLVLLADVVFALLLA) form a helical membrane-spanning segment. Residues 116–161 (TGAAAGFAFTYDVKRYLDGQFDDDSIGTPEVDKLHRDMDKFFDLAY) are Extracellular-facing. Residues 162-182 (AAAGLMLAAAACMALVIMLSV) form a helical membrane-spanning segment. Topologically, residues 183–194 (YSLARQVRSDYI) are cytoplasmic.

This sequence belongs to the Casparian strip membrane proteins (CASP) family. Homodimer and heterodimers.

Its subcellular location is the cell membrane. The sequence is that of CASP-like protein 4D1 from Sorghum bicolor (Sorghum).